The following is a 376-amino-acid chain: RNA binding protein fox-1 homolog 1 (376 aa).

Residues 1–126 are disordered; the sequence is MEEKGSRMVQ…QPKRLHVSNI (126 aa). Residues 72 to 89 are compositionally biased toward polar residues; sequence QTHSEQSPADTNAQTVSG. Residues 90 to 101 show a composition bias toward low complexity; the sequence is TATQTDDAAPTD. Polar residues predominate over residues 102–115; that stretch reads GQPQTQPSENTENK. The RRM domain maps to 119-195; the sequence is KRLHVSNIPF…RKIEVNNATA (77 aa). Arg-319 bears the Asymmetric dimethylarginine mark.

Binds to the C-terminus of ATXN2.

The protein localises to the nucleus. Its subcellular location is the cytoplasm. Functionally, RNA-binding protein that regulates alternative splicing events by binding to 5'-UGCAUGU-3' elements. Prevents binding of U2AF2 to the 3'-splice site. Regulates alternative splicing of tissue-specific exons and of differentially spliced exons during erythropoiesis. This chain is RNA binding protein fox-1 homolog 1 (RBFOX1), found in Macaca fascicularis (Crab-eating macaque).